Reading from the N-terminus, the 914-residue chain is Beta-mannosidase A (914 aa).

The N-terminal stretch at 1-20 is a signal peptide; it reads MRFTATAAALVASSIPATLG. 7 N-linked (GlcNAc...) asparagine glycosylation sites follow: Asn-39, Asn-79, Asn-230, Asn-265, Asn-299, Asn-309, and Asn-330. Catalysis depends on Glu-462, which acts as the Proton donor. 8 N-linked (GlcNAc...) asparagine glycosylation sites follow: Asn-591, Asn-614, Asn-641, Asn-721, Asn-744, Asn-773, Asn-784, and Asn-909.

The protein belongs to the glycosyl hydrolase 2 family. Beta-mannosidase A subfamily. In terms of assembly, homodimer.

The protein resides in the secreted. The catalysed reaction is Hydrolysis of terminal, non-reducing beta-D-mannose residues in beta-D-mannosides.. Its pathway is glycan metabolism; N-glycan degradation. Functionally, exoglycosidase that cleaves the single beta-linked mannose residue from the non-reducing end of beta-mannosidic oligosaccharides of various complexity and length. Involved in the degradation of polymeric mannan and galactomannan. The chain is Beta-mannosidase A (mndA) from Aspergillus oryzae (strain ATCC 42149 / RIB 40) (Yellow koji mold).